The sequence spans 529 residues: Probable pectinesterase/pectinesterase inhibitor 35 (529 aa).

The first 34 residues, 1-34, serve as a signal peptide directing secretion; that stretch reads MATTSFSLPNHKFGIKLMLFLVLNLLSLQTSVFA. Positions 36–180 are pectinesterase inhibitor 35; sequence SSNSKFTKIS…TGLLTNSLDM (145 aa). The interval 42–64 is disordered; that stretch reads TKISRHPNSDSSSRTKPSTSSNK. Positions 50–64 are enriched in low complexity; sequence SDSSSRTKPSTSSNK. N-linked (GlcNAc...) asparagine glycosylation is found at N86, N169, and N193. A pectinesterase 35 region spans residues 228–514; the sequence is HAVVAADGSG…FTVSGFIDGN (287 aa). Positions 302 and 332 each coordinate substrate. Catalysis depends on D355, which acts as the Proton donor; for pectinesterase activity. D376 acts as the Nucleophile; for pectinesterase activity in catalysis. Substrate contacts are provided by R434 and W436.

The protein in the N-terminal section; belongs to the PMEI family. It in the C-terminal section; belongs to the pectinesterase family. As to expression, expressed in siliques.

Its subcellular location is the secreted. The protein resides in the cell wall. The catalysed reaction is [(1-&gt;4)-alpha-D-galacturonosyl methyl ester](n) + n H2O = [(1-&gt;4)-alpha-D-galacturonosyl](n) + n methanol + n H(+). Its pathway is glycan metabolism; pectin degradation; 2-dehydro-3-deoxy-D-gluconate from pectin: step 1/5. Acts in the modification of cell walls via demethylesterification of cell wall pectin. In Arabidopsis thaliana (Mouse-ear cress), this protein is Probable pectinesterase/pectinesterase inhibitor 35 (PME35).